The primary structure comprises 504 residues: Histidine--tRNA ligase (504 aa).

It belongs to the class-II aminoacyl-tRNA synthetase family. In terms of assembly, homodimer.

It is found in the cytoplasm. The enzyme catalyses tRNA(His) + L-histidine + ATP = L-histidyl-tRNA(His) + AMP + diphosphate + H(+). This is Histidine--tRNA ligase (hisS) from Rhizobium meliloti (strain 1021) (Ensifer meliloti).